A 302-amino-acid polypeptide reads, in one-letter code: Tegument protein VP22 (302 aa).

Over residues 1–10 the composition is skewed to basic and acidic residues; sequence MASSDGDRLC. Disordered stretches follow at residues 1 to 42 and 125 to 167; these read MASS…PDDS and SFTK…TATS. An interaction with gE region spans residues 154 to 244; sequence RPISFSTAPK…ANEADLGEGA (91 aa). The span at 157-167 shows a compositional bias: polar residues; sequence SFSTAPKTATS. The short motif at 212-224 is the Nuclear export signal element; it reads LDRLLTGAVIRIT. The segment at 243-302 is disordered; that stretch reads GASVSKRGHNRKTGDLQGGMGNEPMYAQVRKPKSRTDTQTTGRITNRSRARSASRTDARK.

The protein belongs to the alphaherpesvirinae VP22 tegument protein family. Interacts with gE (via C-terminus); this interaction is necessary for the recruitment of VP22/ORF9 to the Golgi and its packaging into virions. Interacts with gM (via C-terminus). Interacts with VP16/ORF10; this interaction allows the formation of a tripartite complex composed of VP16/ORF10, VP22/ORF9 and VHS/ORF17. Interacts with the capsid-binding protein ORF44. Interacts with host CGAS. Post-translationally, highly phosphorylated in the host cell. Packaging is selective for underphosphorylated forms.

Its subcellular location is the virion tegument. It localises to the host cytoplasm. The protein localises to the host nucleus. The protein resides in the host Golgi apparatus. In terms of biological role, tegument protein that plays different roles during the time course of infection. Participates in both the accumulation of viral mRNAs and viral protein translation at late time of infection. Modulates the RNase activity of the virion host shutoff protein ORF17 probably to ensure necessary levels of key cellular mRNAs and proteins. Plays a role in microtubule reorganization that occurs after viral infection by stabilizing microtubule network. Plays a role in the inhibition of host innate immune system by targeting the CGAS enzymatic activity which is the principal cytosolic DNA sensor that detects invading viral DNA. Acts by mediating disruption of liquid-like droplets in which CGAS is activated, thereby preventing CGAS activity. This is Tegument protein VP22 from Varicella-zoster virus (strain Oka vaccine) (HHV-3).